The following is a 619-amino-acid chain: DBH-like monooxygenase protein 2 (619 aa).

Residues 1 to 21 form the signal peptide; the sequence is MACVLLFRLFLLLVLAAFSQG. Over 22 to 594 the chain is Extracellular; that stretch reads KRLGPTSPLR…LSGSNTATLR (573 aa). Residues 40 to 156 enclose the DOMON domain; sequence RAVFLRWDFD…DTMRVLAAYG (117 aa). Tyr-209 is an active-site residue. Disulfide bonds link Cys-211–Cys-261 and Cys-248–Cys-271. The Cu cation site is built by His-241 and His-242. A glycan (N-linked (GlcNAc...) asparagine) is linked at Asn-250. The Cu cation site is built by His-309, His-390, and His-392. Intrachain disulfides connect Cys-366/Cys-481 and Cys-444/Cys-466. Residue His-390 is part of the active site. Residue Asn-405 is glycosylated (N-linked (GlcNAc...) asparagine). Met-465 lines the Cu cation pocket. Asn-477 carries N-linked (GlcNAc...) asparagine glycosylation. The chain crosses the membrane as a helical span at residues 595–615; that stretch reads PLPMIAVLFLQGSLSCLLAML. The Cytoplasmic portion of the chain corresponds to 616 to 619; it reads QTGV.

It belongs to the copper type II ascorbate-dependent monooxygenase family. Requires Cu(2+) as cofactor. Expressed at low levels in thymus and testis.

The protein resides in the membrane. The chain is DBH-like monooxygenase protein 2 (Moxd2) from Mus musculus (Mouse).